We begin with the raw amino-acid sequence, 251 residues long: Triosephosphate isomerase (251 aa).

9–11 (NWK) is a substrate binding site. The active-site Electrophile is the H95. E167 (proton acceptor) is an active-site residue. Residues G173, S213, and 234–235 (GG) each bind substrate.

Belongs to the triosephosphate isomerase family. In terms of assembly, homodimer.

The protein localises to the cytoplasm. It carries out the reaction D-glyceraldehyde 3-phosphate = dihydroxyacetone phosphate. It participates in carbohydrate biosynthesis; gluconeogenesis. It functions in the pathway carbohydrate degradation; glycolysis; D-glyceraldehyde 3-phosphate from glycerone phosphate: step 1/1. Functionally, involved in the gluconeogenesis. Catalyzes stereospecifically the conversion of dihydroxyacetone phosphate (DHAP) to D-glyceraldehyde-3-phosphate (G3P). This is Triosephosphate isomerase from Lactobacillus gasseri (strain ATCC 33323 / DSM 20243 / BCRC 14619 / CIP 102991 / JCM 1131 / KCTC 3163 / NCIMB 11718 / NCTC 13722 / AM63).